The chain runs to 247 residues: 3-deoxy-manno-octulosonate cytidylyltransferase (247 aa).

This sequence belongs to the KdsB family.

Its subcellular location is the cytoplasm. The enzyme catalyses 3-deoxy-alpha-D-manno-oct-2-ulosonate + CTP = CMP-3-deoxy-beta-D-manno-octulosonate + diphosphate. Its pathway is nucleotide-sugar biosynthesis; CMP-3-deoxy-D-manno-octulosonate biosynthesis; CMP-3-deoxy-D-manno-octulosonate from 3-deoxy-D-manno-octulosonate and CTP: step 1/1. It functions in the pathway bacterial outer membrane biogenesis; lipopolysaccharide biosynthesis. Its function is as follows. Activates KDO (a required 8-carbon sugar) for incorporation into bacterial lipopolysaccharide in Gram-negative bacteria. This Methylobacterium sp. (strain 4-46) protein is 3-deoxy-manno-octulosonate cytidylyltransferase.